Consider the following 320-residue polypeptide: Foldase protein PrsA (320 aa).

The first 20 residues, 1 to 20, serve as a signal peptide directing secretion; that stretch reads MKMINKLIVPVTASALLLGA. The N-palmitoyl cysteine moiety is linked to residue cysteine 21. Cysteine 21 is lipidated: S-diacylglycerol cysteine. The region spanning 139–245 is the PpiC domain; that stretch reads EDSKKASHIL…FGYHIIKADK (107 aa). The segment at 159–198 is disordered; it reads EGLDDKEAKQKAEEIQKEVSKDPSKFGEIAKKESMDTGSA.

This sequence belongs to the PrsA family.

It localises to the cell membrane. The enzyme catalyses [protein]-peptidylproline (omega=180) = [protein]-peptidylproline (omega=0). Plays a major role in protein secretion by helping the post-translocational extracellular folding of several secreted proteins. This Staphylococcus aureus (strain Mu3 / ATCC 700698) protein is Foldase protein PrsA.